The sequence spans 63 residues: ATPase inhibitor, mitochondrial (63 aa).

The tract at residues 1–23 is disordered; it reads TAGATGATRQDGSTDAFEKREKA. Residues 18–62 are a coiled coil; the sequence is EKREKAQEDLYIRQHEKEQLEALKESLKKQKKSLDDLEBKIDDLT.

This sequence belongs to the ATPase inhibitor family.

Its subcellular location is the mitochondrion. Its function is as follows. This protein forms a one-to-one complex with ATPase to inhibit the enzyme activity completely. In Cyberlindnera jadinii (Torula yeast), this protein is ATPase inhibitor, mitochondrial.